We begin with the raw amino-acid sequence, 382 residues long: Dual-specificity RNA methyltransferase RlmN (382 aa).

The Proton acceptor role is filled by glutamate 91. The region spanning 97 to 339 (ETDRGTLCIS…TTVRKTRGDD (243 aa)) is the Radical SAM core domain. Residues cysteine 104 and cysteine 344 are joined by a disulfide bond. Residues cysteine 111, cysteine 115, and cysteine 118 each coordinate [4Fe-4S] cluster. Residues 165–166 (GE), serine 197, 219–221 (SLH), and asparagine 301 each bind S-adenosyl-L-methionine. Cysteine 344 acts as the S-methylcysteine intermediate in catalysis.

The protein belongs to the radical SAM superfamily. RlmN family. It depends on [4Fe-4S] cluster as a cofactor.

It localises to the cytoplasm. It carries out the reaction adenosine(2503) in 23S rRNA + 2 reduced [2Fe-2S]-[ferredoxin] + 2 S-adenosyl-L-methionine = 2-methyladenosine(2503) in 23S rRNA + 5'-deoxyadenosine + L-methionine + 2 oxidized [2Fe-2S]-[ferredoxin] + S-adenosyl-L-homocysteine. The catalysed reaction is adenosine(37) in tRNA + 2 reduced [2Fe-2S]-[ferredoxin] + 2 S-adenosyl-L-methionine = 2-methyladenosine(37) in tRNA + 5'-deoxyadenosine + L-methionine + 2 oxidized [2Fe-2S]-[ferredoxin] + S-adenosyl-L-homocysteine. In terms of biological role, specifically methylates position 2 of adenine 2503 in 23S rRNA and position 2 of adenine 37 in tRNAs. m2A2503 modification seems to play a crucial role in the proofreading step occurring at the peptidyl transferase center and thus would serve to optimize ribosomal fidelity. This is Dual-specificity RNA methyltransferase RlmN from Polaromonas sp. (strain JS666 / ATCC BAA-500).